A 394-amino-acid polypeptide reads, in one-letter code: Elongation factor Tu (394 aa).

The tr-type G domain occupies 10–204 (KPHVNVGTIG…HLDTYIPEPE (195 aa)). Residues 19–26 (GHVDHGKT) are G1. Position 19 to 26 (19 to 26 (GHVDHGKT)) interacts with GTP. Thr26 provides a ligand contact to Mg(2+). The G2 stretch occupies residues 60–64 (GITIN). A G3 region spans residues 81 to 84 (DCPG). GTP-binding positions include 81-85 (DCPGH) and 136-139 (NKCD). Positions 136-139 (NKCD) are G4. The interval 174–176 (SAL) is G5.

The protein belongs to the TRAFAC class translation factor GTPase superfamily. Classic translation factor GTPase family. EF-Tu/EF-1A subfamily. Monomer.

The protein resides in the cytoplasm. It carries out the reaction GTP + H2O = GDP + phosphate + H(+). GTP hydrolase that promotes the GTP-dependent binding of aminoacyl-tRNA to the A-site of ribosomes during protein biosynthesis. This is Elongation factor Tu from Klebsiella pneumoniae subsp. pneumoniae (strain ATCC 700721 / MGH 78578).